Consider the following 383-residue polypeptide: N-acetyldiaminopimelate deacetylase (383 aa).

Asp72 is a catalytic residue. Glu131 acts as the Proton acceptor in catalysis.

It belongs to the peptidase M20A family. N-acetyldiaminopimelate deacetylase subfamily.

The enzyme catalyses N-acetyl-(2S,6S)-2,6-diaminopimelate + H2O = (2S,6S)-2,6-diaminopimelate + acetate. It participates in amino-acid biosynthesis; L-lysine biosynthesis via DAP pathway; LL-2,6-diaminopimelate from (S)-tetrahydrodipicolinate (acetylase route): step 3/3. Its function is as follows. Catalyzes the conversion of N-acetyl-diaminopimelate to diaminopimelate and acetate. The chain is N-acetyldiaminopimelate deacetylase from Lacticaseibacillus casei (strain BL23) (Lactobacillus casei).